Consider the following 852-residue polypeptide: MTKSLESVSFKDVTVDFSRDEWQQLDLAQKSLYREVMLENYFNLISVGCQVPKPEVIFSLEQEEPCMLDGEIPSQSRPDGDIGFGPLQQRMSEEVSFQSEININLFTRDDPYSILEELWKDDEHTRKCGENQNKPLSRVVFINKKTLANDSIFEYKDIGEIVHVNTHLVSSRKRPHNCNSCGKNLEPIITLYNRNNATENSDKTIGDGDIFTHLNSHTEVTACECNQCGKPLHHKQALIQQQKIHTRESLYLFSDYVNVFSPKSHAFAHESICAEEKQHECHECEAVFTQKSQLDGSQRVYAGICTEYEKDFSLKSNRQKTPYEGNYYKCSDYGRAFIQKSDLFRCQRIHSGEKPYEYSECEKNLPQNSNLNIHKKIHTGGKHFECTECGKAFTRKSTLSMHQKIHTGEKPYVCTECGKAFIRKSHFITHERIHTGEKPYECSDCGKSFIKKSQLHVHQRIHTGENPFICSECGKVFTHKTNLIIHQKIHTGERPYICTVCGKAFTDRSNLIKHQKIHTGEKPYKCSDCGKSFTWKSRLRIHQKCHTGERHYECSECGKAFIQKSTLSMHQRIHRGEKPYVCTECGKAFFHKSHFITHERIHTGEKPYECSICGKSFTKKSQLHVHQQIHTGEKPYRCAECGKAFTDRSNLFTHQKIHTGEKPYKCSDCGKAFTRKSGLHIHQQSHTGERHYECSECGKAFARKSTLIMHQRIHTGEKPYICNECGKSFIQKSHLNRHRRIHTGEKPYECSDCGKSFIKKSQLHEHHRIHTGEKPYICAECGKAFTIRSNLIKHQKIHTKQKPYKCSDLGKALNWKPQLSMPQKSDNGEVECSMPQLWCGDSEGDQGQLSSI.

The region spanning 8–78 (VSFKDVTVDF…DGEIPSQSRP (71 aa)) is the KRAB domain. Lys156 participates in a covalent cross-link: Glycyl lysine isopeptide (Lys-Gly) (interchain with G-Cter in SUMO2). The C2H2-type 1; degenerate zinc finger occupies 223–245 (CECNQCGKPLHHKQALIQQQKIH). A C2H2-type 2; degenerate zinc finger spans residues 279-301 (HECHECEAVFTQKSQLDGSQRVY). The C2H2-type 3; degenerate zinc finger occupies 328–350 (YKCSDYGRAFIQKSDLFRCQRIH). The segment at 356-378 (YEYSECEKNLPQNSNLNIHKKIH) adopts a C2H2-type 4; degenerate zinc-finger fold. 15 consecutive C2H2-type zinc fingers follow at residues 384–406 (FECT…QKIH), 412–434 (YVCT…ERIH), 440–462 (YECS…QRIH), 468–490 (FICS…QKIH), 496–518 (YICT…QKIH), 524–546 (YKCS…QKCH), 552–574 (YECS…QRIH), 580–602 (YVCT…ERIH), 608–630 (YECS…QQIH), 636–658 (YRCA…QKIH), 664–686 (YKCS…QQSH), 692–714 (YECS…QRIH), 720–742 (YICN…RRIH), 748–770 (YECS…HRIH), and 776–798 (YICA…QKIH). A Glycyl lysine isopeptide (Lys-Gly) (interchain with G-Cter in SUMO2) cross-link involves residue Lys816.

This sequence belongs to the krueppel C2H2-type zinc-finger protein family.

Its subcellular location is the nucleus. Its function is as follows. May be involved in transcriptional regulation. The chain is Zinc finger protein 484 (ZNF484) from Homo sapiens (Human).